Consider the following 249-residue polypeptide: Triosephosphate isomerase (249 aa).

Substrate is bound at residue 9-11 (NWK). Residue H91 is the Electrophile of the active site. Residue E163 is the Proton acceptor of the active site. Residues G169, S209, and 230-231 (GG) each bind substrate.

This sequence belongs to the triosephosphate isomerase family. In terms of assembly, homodimer.

The protein localises to the cytoplasm. It carries out the reaction D-glyceraldehyde 3-phosphate = dihydroxyacetone phosphate. It participates in carbohydrate biosynthesis; gluconeogenesis. Its pathway is carbohydrate degradation; glycolysis; D-glyceraldehyde 3-phosphate from glycerone phosphate: step 1/1. Functionally, involved in the gluconeogenesis. Catalyzes stereospecifically the conversion of dihydroxyacetone phosphate (DHAP) to D-glyceraldehyde-3-phosphate (G3P). This is Triosephosphate isomerase from Halorhodospira halophila (strain DSM 244 / SL1) (Ectothiorhodospira halophila (strain DSM 244 / SL1)).